The chain runs to 546 residues: DNA replication factor Cdt1 (546 aa).

Residues 1–11 show a composition bias toward basic and acidic residues; sequence MEQRRVTDFFA. The PIP-box K+4 motif signature appears at 1–23; it reads MEQRRVTDFFARRRPGPPRIAPP. Disordered regions lie at residues 1 to 118 and 143 to 165; these read MEQR…QDQD and SAQDAGESCTPEAEGRPEEPCGE. Over residues 28–45 the composition is skewed to low complexity; the sequence is RTPSPARPALRAPASATS. The residue at position 29 (T29) is a Phosphothreonine; by MAPK8. Residue S31 is modified to Phosphoserine. The short motif at 68-70 is the Cyclin-binding motif element; the sequence is RRL. Phosphoserine; by MAPK8 is present on S93. The interval 150 to 190 is interaction with GMNN; sequence SCTPEAEGRPEEPCGEKAPAYQRFHALAQPGLPGLVLPYKY. Over residues 155–164 the composition is skewed to basic and acidic residues; it reads AEGRPEEPCG. S318 is subject to Phosphoserine; by MAPK8. A phosphoserine mark is found at S380 and S394. The tract at residues 383 to 415 is disordered; that stretch reads ALRSAAPSSPGSPRPALPATPPATPPAASPSAL. A compositionally biased stretch (pro residues) spans 392 to 410; it reads PGSPRPALPATPPATPPAA. Residues 451–546 are interaction with LRWD1; sequence LERLPELARV…AHQTRAEEGL (96 aa).

Belongs to the Cdt1 family. As to quaternary structure, interacts with GMNN; the interaction inhibits binding of the MCM complex to origins of replication. Interacts with MCM6. Interacts with CDC6; are mutually dependent on one another for loading MCM complexes onto chromatin. Interacts with PCNA. Interacts with LRWD1 during G1 phase and during mitosis. Interacts with NDC80 subunit of the NDC80 complex; leading to kinetochore localization. Interacts with GRWD1; origin binding of GRWD1 is dependent on CDT1. Interacts with KAT7. Interacts with ubiquitin-binding protein FAF1; the interaction is likely to promote CDT1 degradation. Post-translationally, two independent E3 ubiquitin ligase complexes, SCF(SKP2) and the DCX(DTL) complex, mediated CDT1 degradation in S phase. Ubiquitinated by the DCX(DTL) complex, in response to DNA damage, leading to its degradation. Ubiquitination by the DCX(DTL) complex is necessary to ensure proper cell cycle regulation and is PCNA-dependent: interacts with PCNA via its PIP-box, while the presence of the containing the 'K+4' motif in the PIP box, recruit the DCX(DTL) complex, leading to its degradation. Phosphorylation at Thr-29 by CDK2 targets CDT1 for ubiquitination by SCF(SKP2) E3 ubiquitin ligase and subsequent degradation. The interaction with GMNN protects it against ubiquitination. Deubiquitinated by USP37. Ubiquitinated and degraded by the SCF(FBXO31) complex during the G2 phase to prevent re-replication. In terms of processing, phosphorylation by cyclin A-dependent kinases at Thr-29 targets CDT1 for ubiquitynation by SCF(SKP2) E3 ubiquitin ligase and subsequent degradation. Phosphorylated at Thr-29 by MAPK8/JNK1, which blocks replication licensing in response to stress. Binding to GMNN is not affected by phosphorylation.

Its subcellular location is the nucleus. The protein resides in the chromosome. It localises to the centromere. It is found in the kinetochore. In terms of biological role, required for both DNA replication and mitosis. DNA replication licensing factor, required for pre-replication complex assembly. Cooperates with CDC6 and the origin recognition complex (ORC) during G1 phase of the cell cycle to promote the loading of the mini-chromosome maintenance (MCM) complex onto DNA to generate pre-replication complexes (pre-RC). Required also for mitosis by promoting stable kinetochore-microtubule attachments. Potential oncogene. The protein is DNA replication factor Cdt1 of Homo sapiens (Human).